The primary structure comprises 402 residues: Probable tRNA sulfurtransferase (402 aa).

The 106-residue stretch at 61 to 166 (EEIMKRISKV…SDAAYLYSRV (106 aa)) folds into the THUMP domain. ATP-binding positions include 184–185 (ML), 209–210 (HF), Arg-266, Gly-288, and Gln-297.

Belongs to the ThiI family.

The protein localises to the cytoplasm. The enzyme catalyses [ThiI sulfur-carrier protein]-S-sulfanyl-L-cysteine + a uridine in tRNA + 2 reduced [2Fe-2S]-[ferredoxin] + ATP + H(+) = [ThiI sulfur-carrier protein]-L-cysteine + a 4-thiouridine in tRNA + 2 oxidized [2Fe-2S]-[ferredoxin] + AMP + diphosphate. It carries out the reaction [ThiS sulfur-carrier protein]-C-terminal Gly-Gly-AMP + S-sulfanyl-L-cysteinyl-[cysteine desulfurase] + AH2 = [ThiS sulfur-carrier protein]-C-terminal-Gly-aminoethanethioate + L-cysteinyl-[cysteine desulfurase] + A + AMP + 2 H(+). It participates in cofactor biosynthesis; thiamine diphosphate biosynthesis. In terms of biological role, catalyzes the ATP-dependent transfer of a sulfur to tRNA to produce 4-thiouridine in position 8 of tRNAs, which functions as a near-UV photosensor. Also catalyzes the transfer of sulfur to the sulfur carrier protein ThiS, forming ThiS-thiocarboxylate. This is a step in the synthesis of thiazole, in the thiamine biosynthesis pathway. The sulfur is donated as persulfide by IscS. The chain is Probable tRNA sulfurtransferase from Macrococcus caseolyticus (strain JCSC5402) (Macrococcoides caseolyticum).